We begin with the raw amino-acid sequence, 828 residues long: MMSASRLAGTLIPAMAFLSCVRPESWEPCVVPNITYQCMELNFYKIPDNLPFSTKNLDLSFNPLRHLGSYSFFSFPELQVLDLSRCEIQTIEDGAYQSLSHLSTLILTGNPIQNLALGAFSGLSSLQKLVAVETNLASLENFPIGHLKTLKELNVAHNLIQSFKLPEYFSNLTNLEHLDLSSNKIQSIYCKDLQVLHQMPLLNLSLDLSLNAMNFIQPGAFKEIRLHKLTLRNSFDSLNVMKTCIQGLAGLEVHHLVLGEFRNEKNLEKFDTSALEGLCNLTIEEFRLAYLDYYLDDIIDLFNCLANVSSFSLVSVTIKSVKDFSYNFGWQHLELVNCKFGQFPTLELKSLKRLTFTANKGGNAFSEVDLPSLEFLDLSRNGLSFKGCCSQSDFGTTSLKYLDLSFNDVITMGSNFLGLEQLEHLDFQHSNLKQMSEFSVFLSLRNLIYLDISHTHTRVAFNGIFNGLSSLKVLKMAGNSFQENFLPDIFTELRNLTFLDLSQCQLEQLSPTAFNSLSSLQVLNMSHNNFFSLDTFPYKCLNSLQVLDYSLNHIMTSKKQELQHFPSSLAFLNLTQNDFACTCEHQSFLQWIKDQRQLLVEVERMECATPSDKQGMPVLSLNITCQMNKTVIGVSVFSVLVVSVVAVLVYKFYFHLMLLAGCIKYGRGENTYDAFVIYSSQDEDWVRNELVKNLEEGVPTFQLCLHYRDFIPGVAIAANIIHEGFHKSRKVIVVVSQHFIQSRWCIFEYEIAQTWQFLSSRAGIIFIVLQKVEKTLLRQQVELYRLLSRNTYLEWEDSVLGRHIFWRRLRKALLDGKSWNPEGTVGTG.

A signal peptide spans methionine 1–proline 23. Topologically, residues glutamate 24–lysine 629 are extracellular. Cysteines 29 and 38 form a disulfide. Asparagine 33 carries an N-linked (GlcNAc...) asparagine glycan. 5 LRR repeats span residues serine 53–serine 74, glutamate 77–serine 98, histidine 101–glycine 122, serine 125–histidine 146, and threonine 149–serine 170. Residue asparagine 171 is glycosylated (N-linked (GlcNAc...) asparagine). LRR repeat units follow at residues asparagine 174–valine 195, asparagine 203–glutamate 223, and arginine 225–isoleucine 245. N-linked (GlcNAc...) asparagine glycosylation is present at asparagine 203. A disulfide bridge connects residues cysteine 279 and cysteine 304. N-linked (GlcNAc...) asparagine glycans are attached at residues asparagine 280 and asparagine 307. 8 LRR repeats span residues serine 372–serine 392, serine 398–glutamate 420, glutamine 421–leucine 442, asparagine 446–histidine 454, serine 470–leucine 493, asparagine 495–serine 516, serine 519–cysteine 540, and serine 543–glutamine 563. The cysteines at positions 388 and 389 are disulfide-linked. Asparagine 495 and asparagine 524 each carry an N-linked (GlcNAc...) asparagine glycan. N-linked (GlcNAc...) asparagine glycosylation occurs at asparagine 573. In terms of domain architecture, LRRCT spans asparagine 577 to methionine 627. Cystine bridges form between cysteine 581-cysteine 607 and cysteine 583-cysteine 625. 2 N-linked (GlcNAc...) asparagine glycosylation sites follow: asparagine 622 and asparagine 628. Residues threonine 630–tyrosine 650 traverse the membrane as a helical segment. The Cytoplasmic segment spans residues lysine 651–glycine 828. The TIR domain occupies asparagine 670–leucine 813.

The protein belongs to the Toll-like receptor family. In terms of assembly, belongs to the lipopolysaccharide (LPS) receptor, a multi-protein complex containing at least CD14, LY96 and TLR4. Binding to bacterial LPS leads to homodimerization. Interacts with LY96 via the extracellular domain. Interacts with MYD88 and TIRAP via their respective TIR domains. Interacts with TICAM2. Interacts with NOX4. Interacts with CNPY3 and HSP90B1; this interaction is required for proper folding in the endoplasmic reticulum. Interacts with MAP3K21; this interaction leads to negative regulation of TLR4 signaling. Interacts with CD36, following CD36 stimulation by oxLDL or amyloid-beta 42, and forms a heterodimer with TLR6. The trimeric complex is internalized and triggers inflammatory response. LYN kinase activity facilitates TLR4-TLR6 heterodimerization and signal initiation. Interacts with TICAM1 in response to LPS in a WDFY1-dependent manner. Interacts with WDFY1 in response to LPS. Interacts with SMPDL3B. Interacts with CEACAM1; upon lipopolysaccharide stimulation, forms a complex including TLR4 and the phosphorylated form of SYK and CEACAM1, which in turn, recruits PTPN6 that dephosphorylates SYK, reducing the production of reactive oxygen species (ROS) and lysosome disruption, which in turn, reduces the activity of the inflammasome. Interacts with RFTN1; the interaction occurs in response to lipopolysaccharide stimulation. Interacts with SCIMP; the interaction occurs in response to lipopolysaccharide stimulation and is enhanced by phosphorylation of SCIMP by LYN. This interaction facilitates the phosphorylation of TLR4 by LYN which elicits a selective cytokine response in macrophages. Interacts with TRAF3IP3. Interacts with TREM1; this interaction enhances TLR4-mediated inflammatory response. Interacts with ZG16B/PAUF. Interacts with CD82; this interaction inhibits TLR4-mediated signaling pathway. Phosphorylated on tyrosine residues by LYN after binding lipopolysaccharide. Post-translationally, ubiquitinated by RNF128 via 'Lys-28'-linked polyubiquitin chains, leading to proteasomal degradation.

The protein resides in the cell membrane. It localises to the early endosome. It is found in the cell projection. The protein localises to the ruffle. Its function is as follows. Transmembrane receptor that functions as a pattern recognition receptor recognizing pathogen- and damage-associated molecular patterns (PAMPs and DAMPs) to induce innate immune responses via downstream signaling pathways. At the plasma membrane, cooperates with LY96 to mediate the innate immune response to bacterial lipopolysaccharide (LPS). Also involved in LPS-independent inflammatory responses triggered by free fatty acids, such as palmitate, and Ni(2+). Mechanistically, acts via MYD88, TIRAP and TRAF6, leading to NF-kappa-B activation, cytokine secretion and the inflammatory response. Alternatively, CD14-mediated TLR4 internalization via endocytosis is associated with the initiation of a MYD88-independent signaling via the TICAM1-TBK1-IRF3 axis leading to type I interferon production. In addition to the secretion of proinflammatory cytokines, initiates the activation of NLRP3 inflammasome and formation of a positive feedback loop between autophagy and NF-kappa-B signaling cascade. In complex with TLR6, promotes inflammation in monocytes/macrophages by associating with TLR6 and the receptor CD86. Upon ligand binding, such as oxLDL or amyloid-beta 42, the TLR4:TLR6 complex is internalized and triggers inflammatory response, leading to NF-kappa-B-dependent production of CXCL1, CXCL2 and CCL9 cytokines, via MYD88 signaling pathway, and CCL5 cytokine, via TICAM1 signaling pathway. In myeloid dendritic cells, vesicular stomatitis virus glycoprotein G but not LPS promotes the activation of IRF7, leading to type I IFN production in a CD14-dependent manner. The sequence is that of Toll-like receptor 4 (TLR4) from Pongo pygmaeus (Bornean orangutan).